The primary structure comprises 107 residues: Putative regulatory protein BCG9842_A0044 (107 aa).

Belongs to the RemA family.

This chain is Putative regulatory protein BCG9842_A0044, found in Bacillus cereus (strain G9842).